Reading from the N-terminus, the 327-residue chain is Undecaprenyl-phosphate 4-deoxy-4-formamido-L-arabinose transferase (327 aa).

Topologically, residues 1–235 are cytoplasmic; sequence MFDAAPIKKV…TCLTTTPLRL (235 aa). Residues 236–256 traverse the membrane as a helical segment; it reads LSLLGSVIAIGGFSLSVLLIV. The Periplasmic segment spans residues 257–269; sequence LRLALGPQWAAEG. Residues 270–290 traverse the membrane as a helical segment; it reads VFMLFAVLFTFIGAQFIGMGL. The Cytoplasmic portion of the chain corresponds to 291–327; that stretch reads LGEYIGRIYNDVRARPRYFVQQVIYPESTPFTEESHQ.

The protein belongs to the glycosyltransferase 2 family.

It localises to the cell inner membrane. The catalysed reaction is UDP-4-deoxy-4-formamido-beta-L-arabinose + di-trans,octa-cis-undecaprenyl phosphate = 4-deoxy-4-formamido-alpha-L-arabinopyranosyl di-trans,octa-cis-undecaprenyl phosphate + UDP. It participates in glycolipid biosynthesis; 4-amino-4-deoxy-alpha-L-arabinose undecaprenyl phosphate biosynthesis; 4-amino-4-deoxy-alpha-L-arabinose undecaprenyl phosphate from UDP-4-deoxy-4-formamido-beta-L-arabinose and undecaprenyl phosphate: step 1/2. Its pathway is bacterial outer membrane biogenesis; lipopolysaccharide biosynthesis. Functionally, catalyzes the transfer of 4-deoxy-4-formamido-L-arabinose from UDP to undecaprenyl phosphate. The modified arabinose is attached to lipid A and is required for resistance to polymyxin and cationic antimicrobial peptides. This chain is Undecaprenyl-phosphate 4-deoxy-4-formamido-L-arabinose transferase, found in Salmonella choleraesuis (strain SC-B67).